Here is a 196-residue protein sequence, read N- to C-terminus: Mediator of RNA polymerase II transcription subunit 21 (196 aa).

Residues 52–111 form a disordered region; that stretch reads KIPKNASTPPVPASAPQAAQSQSQASPPPPDTANPQTGGQHADQQQQSPDGEGLPAPDSP. 2 stretches are compositionally biased toward low complexity: residues 65-76 and 87-98; these read SAPQAAQSQSQA and QTGGQHADQQQQ. The stretch at 144–174 forms a coiled coil; sequence SSEAEQERRIRELEGELRIVEGVREERRREL.

It belongs to the Mediator complex subunit 21 family. As to quaternary structure, component of the Mediator complex.

It is found in the nucleus. In terms of biological role, component of the Mediator complex, a coactivator involved in the regulated transcription of nearly all RNA polymerase II-dependent genes. Mediator functions as a bridge to convey information from gene-specific regulatory proteins to the basal RNA polymerase II transcription machinery. Mediator is recruited to promoters by direct interactions with regulatory proteins and serves as a scaffold for the assembly of a functional preinitiation complex with RNA polymerase II and the general transcription factors. This Aspergillus niger (strain ATCC MYA-4892 / CBS 513.88 / FGSC A1513) protein is Mediator of RNA polymerase II transcription subunit 21 (srb7).